The primary structure comprises 210 residues: Outer-membrane lipoprotein LolB (210 aa).

A signal peptide spans 1–19 (MNHLKSFFTALVAGFILTA). Cys-20 carries the N-palmitoyl cysteine lipid modification. The S-diacylglycerol cysteine moiety is linked to residue Cys-20.

The protein belongs to the LolB family. Monomer.

It is found in the cell outer membrane. In terms of biological role, plays a critical role in the incorporation of lipoproteins in the outer membrane after they are released by the LolA protein. The protein is Outer-membrane lipoprotein LolB of Mannheimia succiniciproducens (strain KCTC 0769BP / MBEL55E).